The primary structure comprises 148 residues: Small ribosomal subunit protein bS16 (148 aa).

Positions 111–122 (AAAGEEPVAEAT) are enriched in low complexity. Residues 111–148 (AAAGEEPVAEATTPKKKGGKKAEAEDKAEEQKSEEGQA) are disordered. Residues 130 to 148 (KKAEAEDKAEEQKSEEGQA) show a composition bias toward basic and acidic residues.

This sequence belongs to the bacterial ribosomal protein bS16 family.

The sequence is that of Small ribosomal subunit protein bS16 from Saccharopolyspora erythraea (strain ATCC 11635 / DSM 40517 / JCM 4748 / NBRC 13426 / NCIMB 8594 / NRRL 2338).